Consider the following 76-residue polypeptide: Small ribosomal subunit protein bS18 (76 aa).

Belongs to the bacterial ribosomal protein bS18 family. Part of the 30S ribosomal subunit. Forms a tight heterodimer with protein bS6.

Binds as a heterodimer with protein bS6 to the central domain of the 16S rRNA, where it helps stabilize the platform of the 30S subunit. The chain is Small ribosomal subunit protein bS18 from Mesoplasma florum (strain ATCC 33453 / NBRC 100688 / NCTC 11704 / L1) (Acholeplasma florum).